The sequence spans 71 residues: Frenatin 2.3S (71 aa).

A signal peptide spans 1 to 22; sequence MAFLKKSLFLVLFLGLVSLSMG. The segment at 21–56 is disordered; that stretch reads MGEREKREEEEEEEEENKEEEANEEGKGESEEKRGL. Positions 23–54 are excised as a propeptide; that stretch reads EREKREEEEEEEEENKEEEANEEGKGESEEKR. The segment covering 28-43 has biased composition (acidic residues); it reads EEEEEEEEENKEEEAN. Over residues 44 to 55 the composition is skewed to basic and acidic residues; sequence EEGKGESEEKRG. Gly70 bears the Glycine amide; in Frenatin 2.1S mark.

It belongs to the frog skin active peptide (FSAP) family. Frenatin subfamily. In terms of processing, frenatin 2.3S is not amidated. As to expression, expressed by the skin glands.

It localises to the secreted. Its function is as follows. Antimicrobial peptide with potent activity against Gram-negative bacteria. Shows immunostimulatory actions both in vitro and in vivo. In vitro, is cytotoxic to non-small cell lung adenocarcinoma A549 cells. Also, stimulates production of pro-inflammatory cytokines by mouse peritoneal macrophages and down-regulates production of the anti-inflammatory cytokine IL-10 by lipopolysaccharide (LPS)-stimulated cells. In vivo, intraperitoneal injection in mice enhances the activation state and homing capacity of Th1 type lymphocytes and promotes the recruitment, activation and tumoricidal capacities of peritoneal NK cells. Has a very weak activity in stimulation of insulin release and a weak hemolytic activity. Antimicrobial peptide with potent activity against some Gram-positive and Gram-negative bacteria. Has a multifunctional mode of action. It displays depolarization and bacterial cell leakage, and can also internalize into bacterial cells and alter specific gene expression involved in bacterial resistance mechanisms. Does not agglutinate bacteria and lipid vesicles, even a high concentrations. Also displays moderate cellular protection against yellow fever virus (YFV)-infected Vero cells without causing significant cytotoxicity. Shows a weak hemolytic activity, and is not cytotoxic to monocytes. Frenatin 2.3S (version without Gly-71) shows no or very weak antibacterial activity, shows no or very weak cytotoxicity to lung adenocarcinoma A549 cells and shows very weak hemolysis. It only stimulates production of pro-inflammatory cytokines IL-23 (but not IL-1beta and TNF-alpha) by mouse peritoneal macrophages and has no effect on the production of the anti-inflammatory cytokine IL-10. Frenatin 2.3S (version without Gly-71) very weakly stimulates insulin release. The polypeptide is Frenatin 2.3S (Sphaenorhynchus lacteus (Orinoco lime treefrog)).